Reading from the N-terminus, the 450-residue chain is Glucose-6-phosphate isomerase (450 aa).

The active-site Proton donor is the glutamate 291. Residues histidine 312 and lysine 426 contribute to the active site.

It belongs to the GPI family.

The protein resides in the cytoplasm. It catalyses the reaction alpha-D-glucose 6-phosphate = beta-D-fructose 6-phosphate. It functions in the pathway carbohydrate biosynthesis; gluconeogenesis. It participates in carbohydrate degradation; glycolysis; D-glyceraldehyde 3-phosphate and glycerone phosphate from D-glucose: step 2/4. Functionally, catalyzes the reversible isomerization of glucose-6-phosphate to fructose-6-phosphate. The polypeptide is Glucose-6-phosphate isomerase (Clostridium novyi (strain NT)).